A 115-amino-acid chain; its full sequence is Superoxide reductase (115 aa).

Fe cation is bound by residues E14, H16, H41, H47, C102, and H105.

The protein belongs to the desulfoferrodoxin family. In terms of assembly, homotetramer. Fe cation is required as a cofactor.

The catalysed reaction is reduced [rubredoxin] + superoxide + 2 H(+) = oxidized [rubredoxin] + H2O2. In terms of biological role, uses electrons from reduced NADP, by way of rubredoxin and an oxidoreductase, to catalyze the reduction of superoxide to hydrogen peroxide. The chain is Superoxide reductase (sorA) from Pyrococcus horikoshii (strain ATCC 700860 / DSM 12428 / JCM 9974 / NBRC 100139 / OT-3).